The sequence spans 180 residues: Large ribosomal subunit protein uL16 (180 aa).

The protein belongs to the universal ribosomal protein uL16 family.

In Hyperthermus butylicus (strain DSM 5456 / JCM 9403 / PLM1-5), this protein is Large ribosomal subunit protein uL16.